Reading from the N-terminus, the 360-residue chain is Peptide chain release factor 1 (360 aa).

Q235 is modified (N5-methylglutamine).

It belongs to the prokaryotic/mitochondrial release factor family. Methylated by PrmC. Methylation increases the termination efficiency of RF1.

It localises to the cytoplasm. Functionally, peptide chain release factor 1 directs the termination of translation in response to the peptide chain termination codons UAG and UAA. This chain is Peptide chain release factor 1, found in Burkholderia thailandensis (strain ATCC 700388 / DSM 13276 / CCUG 48851 / CIP 106301 / E264).